The chain runs to 150 residues: MEIEIQTKPFGKMQISEKQILSFPEGLLGFEDYKKFALIEEEEESVFKWLQSVEEVDLAFVVIPPSLFKKEYKPLIPEQELQGIGITDLEDGLMLVIVTVPGEDPALMTANMQGPILINKKTLLGKQFISRNESHSVREKILASAAVEMD.

Belongs to the FliW family. In terms of assembly, interacts with translational regulator CsrA and flagellin(s).

The protein resides in the cytoplasm. In terms of biological role, acts as an anti-CsrA protein, binds CsrA and prevents it from repressing translation of its target genes, one of which is flagellin. Binds to flagellin and participates in the assembly of the flagellum. This is Flagellar assembly factor FliW from Leptospira borgpetersenii serovar Hardjo-bovis (strain L550).